A 353-amino-acid polypeptide reads, in one-letter code: UDP-3-O-acylglucosamine N-acyltransferase (353 aa).

His242 acts as the Proton acceptor in catalysis.

The protein belongs to the transferase hexapeptide repeat family. LpxD subfamily. In terms of assembly, homotrimer.

The enzyme catalyses a UDP-3-O-[(3R)-3-hydroxyacyl]-alpha-D-glucosamine + a (3R)-hydroxyacyl-[ACP] = a UDP-2-N,3-O-bis[(3R)-3-hydroxyacyl]-alpha-D-glucosamine + holo-[ACP] + H(+). It functions in the pathway bacterial outer membrane biogenesis; LPS lipid A biosynthesis. Its function is as follows. Catalyzes the N-acylation of UDP-3-O-acylglucosamine using 3-hydroxyacyl-ACP as the acyl donor. Is involved in the biosynthesis of lipid A, a phosphorylated glycolipid that anchors the lipopolysaccharide to the outer membrane of the cell. In Pseudomonas aeruginosa (strain LESB58), this protein is UDP-3-O-acylglucosamine N-acyltransferase.